The following is a 221-amino-acid chain: Adenylate kinase (221 aa).

10 to 15 contributes to the ATP binding site; that stretch reads GAGKGT. Positions 30–59 are NMP; that stretch reads STGDMLRAAVKARTELGVAAKKIMDAGGLV. Residues threonine 31, arginine 36, 57–59, 85–88, and glutamine 92 contribute to the AMP site; these read GLV and GFPR. The interval 122 to 159 is LID; sequence GRRVHLASGRTYHIKFNPPKVEGKDDITGDPLIQRDDD. ATP-binding positions include arginine 123 and 132 to 133; that span reads TY. Residues arginine 156 and arginine 167 each contribute to the AMP site. Serine 207 contacts ATP.

Belongs to the adenylate kinase family. Monomer.

It localises to the cytoplasm. It carries out the reaction AMP + ATP = 2 ADP. Its pathway is purine metabolism; AMP biosynthesis via salvage pathway; AMP from ADP: step 1/1. Functionally, catalyzes the reversible transfer of the terminal phosphate group between ATP and AMP. Plays an important role in cellular energy homeostasis and in adenine nucleotide metabolism. This is Adenylate kinase from Polynucleobacter necessarius subsp. necessarius (strain STIR1).